Consider the following 396-residue polypeptide: MGKAKFERNKPHVNIGTIGHVDHGKTTLTAAITITLAKTGGATAKNYADIDAAPEEKARGITINTAHVEYETPARHYAHVDCPGHADYVKNMITGAAQMDGAILVCSAADGPMPQTREHILLARQVGVPALVVFLNKVDMVDDEELLELVEMEVRELLSSYNFPGDDIPIIKGSALAAVEDRNPEIGQDRILELMKAVDEYIPTPERPLDKPFLMPVEDVFSISGRGTVVTGRVEQGIVKVGEEIEIVGIRPTVKTTCTGVEMFRKLLDQGQAGDNIGALLRGVDREGVERGQVLCKPGSITPHTLFEAEAYILTKEEGGRHTPFFTNYRPQFYFRTTDVTGIVKLPEDKEMVLPGDNVKMDVELINPIAMDKGLRFAIREGGRTVGAGVVSEIKK.

The tr-type G domain maps to 10 to 206 (KPHVNIGTIG…AVDEYIPTPE (197 aa)). Positions 19-26 (GHVDHGKT) are G1. 19–26 (GHVDHGKT) lines the GTP pocket. T26 contacts Mg(2+). Residues 60 to 64 (GITIN) form a G2 region. The G3 stretch occupies residues 81 to 84 (DCPG). Residues 81–85 (DCPGH) and 136–139 (NKVD) each bind GTP. The interval 136 to 139 (NKVD) is G4. The G5 stretch occupies residues 174-176 (SAL).

This sequence belongs to the TRAFAC class translation factor GTPase superfamily. Classic translation factor GTPase family. EF-Tu/EF-1A subfamily. As to quaternary structure, monomer.

Its subcellular location is the cytoplasm. It carries out the reaction GTP + H2O = GDP + phosphate + H(+). Functionally, GTP hydrolase that promotes the GTP-dependent binding of aminoacyl-tRNA to the A-site of ribosomes during protein biosynthesis. The sequence is that of Elongation factor Tu 2 from Hyphomonas neptunium (strain ATCC 15444).